We begin with the raw amino-acid sequence, 206 residues long: High frequency lysogenization protein HflD homolog (206 aa).

This sequence belongs to the HflD family.

Its subcellular location is the cytoplasm. The protein resides in the cell inner membrane. This Pseudomonas syringae pv. syringae (strain B728a) protein is High frequency lysogenization protein HflD homolog.